Reading from the N-terminus, the 548-residue chain is Putative F-box protein At1g33020 (548 aa).

The 50-residue stretch at 4–53 folds into the F-box domain; it reads AENLDSIPTDLILEIFSRMSTKSIGRCRCVSKLWKSMLGHPYFTELFLTR. Residues 380 to 404 form a disordered region; sequence KPISPPKQKPKPPSTETSSREDHQG. Over residues 382–392 the composition is skewed to pro residues; it reads ISPPKQKPKPP.

The protein is Putative F-box protein At1g33020 of Arabidopsis thaliana (Mouse-ear cress).